A 117-amino-acid polypeptide reads, in one-letter code: Minor capsid protein p17 (117 aa).

A glycan (N-linked (GlcNAc...) asparagine; by host) is linked at asparagine 12. The chain crosses the membrane as a helical span at residues 39 to 59 (AILLGILILLVIILIIVAIVY). N-linked (GlcNAc...) asparagine; by host glycans are attached at residues asparagine 61 and asparagine 97.

The protein belongs to the asfivirus minor capsid protein p17 family. In terms of assembly, interacts with the minor capsid protein M1249L and with the hexon capsid protein p72 capsomers; these interactions form a rigid zipper structure that stabilizes the capsomers. Interacts with host STING1.

The protein localises to the virion membrane. Its subcellular location is the host endoplasmic reticulum membrane. It is found in the host Golgi apparatus membrane. In terms of biological role, together with the penton and the other minor capsid proteins (M1249L, p49), forms a complicated network immediately below the outer capsid shell, stabilizing the whole capsid. Three copies of p17 encircle each p72 capsomer in the inner capsid shell, anchoring p72 capsomers on the inner membrane. Required for the assembly of the capsid and icosahedral morphogenesis. Additionally, inhibits the host cGAS-STING pathway through its interaction with STING1 and subsequent interference of the recruitment of downstream components TBK1 and IKBKE. This is Minor capsid protein p17 from African swine fever virus (strain Badajoz 1971 Vero-adapted) (Ba71V).